The following is a 277-amino-acid chain: MSRQETTPYTLGEIEQGTPCCVPKALLRVRDLAVSYGEITVLSQVSLDIYKGCITALIGPSGCGKTSFLSTLNRLTDHHERARVNGRILFDGQDLLCDPVDTLRLRRRIGMIFQRPNPFPLSIWRNLELPLKEHGVRDRQTRYRKIEQALKDVGLWDEVSDRLGISALVLSGGQQQRLCIARALVLEPEILLMDEPCSALDPISSGVVEELILRLRGRYTVVIVTHNLAQARRVANYAGFFWMTERVGKLIEFGQCQHLFETPSHELTAAYISGARG.

An ABC transporter domain is found at 27–272; it reads LRVRDLAVSY…PSHELTAAYI (246 aa). 59–66 lines the ATP pocket; it reads GPSGCGKT.

This sequence belongs to the ABC transporter superfamily. Phosphate importer (TC 3.A.1.7) family. The complex is composed of two ATP-binding proteins (PstB), two transmembrane proteins (PstC and PstA) and a solute-binding protein (PstS).

It localises to the cell inner membrane. The catalysed reaction is phosphate(out) + ATP + H2O = ADP + 2 phosphate(in) + H(+). Functionally, part of the ABC transporter complex PstSACB involved in phosphate import. Responsible for energy coupling to the transport system. This is Phosphate import ATP-binding protein PstB 1 from Nitrosococcus oceani (strain ATCC 19707 / BCRC 17464 / JCM 30415 / NCIMB 11848 / C-107).